Reading from the N-terminus, the 97-residue chain is Coiled-coil domain-containing protein 167 (97 aa).

Residues 10–79 (GVALEIDGLE…LRQENRKNML (70 aa)) are a coiled coil. The chain crosses the membrane as a helical span at residues 78-95 (MLLSVAIFILLTLVYAYW).

It is found in the membrane. The protein is Coiled-coil domain-containing protein 167 (CCDC167) of Homo sapiens (Human).